The primary structure comprises 388 residues: Leucine aminopeptidase 1 (388 aa).

Residues methionine 1–alanine 19 form the signal peptide. The propeptide occupies alanine 20–valine 88. Asparagine 180 carries an N-linked (GlcNAc...) asparagine glycan. The Zn(2+) site is built by histidine 188, aspartate 207, glutamate 246, and aspartate 273. Cysteine 322 and cysteine 326 are oxidised to a cystine. Histidine 355 is a binding site for Zn(2+).

The protein belongs to the peptidase M28 family. M28E subfamily. In terms of assembly, monomer. Requires Zn(2+) as cofactor.

Its subcellular location is the secreted. Functionally, extracellular aminopeptidase that allows assimilation of proteinaceous substrates. This is Leucine aminopeptidase 1 (LAP1) from Coccidioides posadasii (strain C735) (Valley fever fungus).